Here is a 69-residue protein sequence, read N- to C-terminus: MAVPKKRTSKSKRKIRKTVWREKANKAAKKAFSLARLILSGRSKSFCYTVNNKSSESSESTSIDESDDS.

This sequence belongs to the bacterial ribosomal protein bL32 family.

It is found in the plastid. The protein localises to the chloroplast. This chain is Large ribosomal subunit protein bL32c (rpl32), found in Anthoceros angustus (Hornwort).